An 819-amino-acid polypeptide reads, in one-letter code: Proteome of basal body protein 15 (819 aa).

Low complexity-rich tracts occupy residues P46–R59 and R572–T581. 2 disordered regions span residues P46 to G72 and E564 to V590. Residues Y546–H580 adopt a coiled-coil conformation.

It is found in the cytoplasm. The protein localises to the cytoskeleton. It localises to the microtubule organizing center. The protein resides in the centrosome. Its subcellular location is the centriole. The sequence is that of Proteome of basal body protein 15 from Chlamydomonas reinhardtii (Chlamydomonas smithii).